A 137-amino-acid polypeptide reads, in one-letter code: Transcription antitermination protein NusB (137 aa).

Belongs to the NusB family.

Its function is as follows. Involved in transcription antitermination. Required for transcription of ribosomal RNA (rRNA) genes. Binds specifically to the boxA antiterminator sequence of the ribosomal RNA (rrn) operons. This chain is Transcription antitermination protein NusB, found in Clavibacter sepedonicus (Clavibacter michiganensis subsp. sepedonicus).